We begin with the raw amino-acid sequence, 133 residues long: Fatty acid-binding protein, heart (133 aa).

Position 2 is an N-acetylvaline (Val-2). Thr-8 is modified (phosphothreonine). Tyr-20 carries the post-translational modification Phosphotyrosine; by Tyr-kinases. Ser-23 is subject to Phosphoserine. Residue Thr-30 is modified to Phosphothreonine. Ser-83 bears the Phosphoserine mark. 127-129 serves as a coordination point for (9Z)-octadecenoate; sequence RTY. 127-129 is a hexadecanoate binding site; it reads RTY. An octadecanoate-binding site is contributed by 127-129; that stretch reads RTY.

The protein belongs to the calycin superfamily. Fatty-acid binding protein (FABP) family.

Its subcellular location is the cytoplasm. FABPs are thought to play a role in the intracellular transport of long-chain fatty acids and their acyl-CoA esters. The protein is Fatty acid-binding protein, heart (FABP3) of Bos mutus grunniens (Wild yak).